A 134-amino-acid chain; its full sequence is Profilin-3 (134 aa).

The cysteines at positions 13 and 118 are disulfide-linked. Residues 84–100 carry the Involved in PIP2 interaction motif; sequence AVIRGKKGSGGITIKKT. Threonine 114 is modified (phosphothreonine).

Belongs to the profilin family. In terms of assembly, occurs in many kinds of cells as a complex with monomeric actin in a 1:1 ratio. Post-translationally, phosphorylated by MAP kinases.

It is found in the cytoplasm. Its subcellular location is the cytoskeleton. Functionally, binds to actin and affects the structure of the cytoskeleton. At high concentrations, profilin prevents the polymerization of actin, whereas it enhances it at low concentrations. This chain is Profilin-3, found in Olea europaea (Common olive).